A 61-amino-acid polypeptide reads, in one-letter code: MGRGDTPRHPPSPAAGFGVHRGALLIPVALRVLWAGRTPRPFTPGLADPRRLGPRRVQAAQ.

The segment at 39–61 (PRPFTPGLADPRRLGPRRVQAAQ) is disordered.

This is an uncharacterized protein from Pan troglodytes (Chimpanzee).